The following is a 145-amino-acid chain: Large ribosomal subunit protein uL13 (145 aa).

This sequence belongs to the universal ribosomal protein uL13 family. Part of the 50S ribosomal subunit.

In terms of biological role, this protein is one of the early assembly proteins of the 50S ribosomal subunit, although it is not seen to bind rRNA by itself. It is important during the early stages of 50S assembly. The chain is Large ribosomal subunit protein uL13 from Staphylococcus haemolyticus (strain JCSC1435).